We begin with the raw amino-acid sequence, 190 residues long: MSKGTSIKEALSKWEEKNSEKAAEAKEVKLYQMLPPIEKMDASLSTLTVCEKLSLSTNCIEKIANLNGLKNLKILSLGRNNIKNLNGLEAVGDSLEELWISYNSIEKLKGIHVLKKLKVLLMSNNQVKDWGEFNKLQELPVLMELVFVGNPLEEKHSAEGDWQDRVTKSLKALKKLDGTPIIKNDEEEED.

4 LRR repeats span residues 49-70, 71-92, 94-115, and 116-137; these read VCEKLSLSTNCIEKIANLNGLK, NLKILSLGRNNIKNLNGLEAVG, SLEELWISYNSIEKLKGIHVLK, and KLKVLLMSNNQVKDWGEFNKLQ. One can recognise an LRRCT domain in the interval 150–190; it reads NPLEEKHSAEGDWQDRVTKSLKALKKLDGTPIIKNDEEEED.

Belongs to the dynein light chain LC1-type family. In terms of assembly, interacts with DNAH5, a outer arm dynein heavy chain. Interacts with tubulin located within the A-tubule of the outer doublets in a ATP-independent manner.

The protein resides in the cytoplasm. Its subcellular location is the cytoskeleton. The protein localises to the cilium axoneme. Part of the multisubunit axonemal ATPase complexes that generate the force for cilia motility and govern beat frequency. Component of the outer arm dynein (ODA). May be involved in a mechanosensory feedback mechanism controlling ODA activity based on external conformational cues by tethering the outer arm dynein heavy chain (DNAH5) to the microtubule within the axoneme. The sequence is that of Dynein axonemal light chain 1 (DNAL1) from Ciona intestinalis (Transparent sea squirt).